Consider the following 171-residue polypeptide: AN1-type zinc finger protein 2A (171 aa).

AN1-type zinc fingers lie at residues 4–52 (PDLG…KKDV) and 94–142 (KVFT…SSAS). Cysteine 10, cysteine 15, cysteine 25, cysteine 28, cysteine 33, histidine 36, histidine 42, cysteine 44, cysteine 100, cysteine 105, cysteine 115, cysteine 118, cysteine 123, histidine 126, histidine 132, and cysteine 134 together coordinate Zn(2+). A disordered region spans residues 134-171 (CQAGSSSASRGRTSTSRAAEQKPSGVSWLAQRLRRTVK). Residues 136–151 (AGSSSASRGRTSTSRA) show a composition bias toward low complexity.

It localises to the cytoplasm. The protein localises to the nucleus. The protein is AN1-type zinc finger protein 2A (Zfand2a) of Mus musculus (Mouse).